The primary structure comprises 450 residues: Phosphomethylpyrimidine synthase (450 aa).

Residues asparagine 80, methionine 109, tyrosine 138, histidine 173, 193-195 (SRG), 234-237 (DSLR), and glutamate 273 each bind substrate. Residue histidine 277 coordinates Zn(2+). Tyrosine 300 contributes to the substrate binding site. A Zn(2+)-binding site is contributed by histidine 341. The [4Fe-4S] cluster site is built by cysteine 421, cysteine 424, and cysteine 429.

Belongs to the ThiC family. As to quaternary structure, homodimer. [4Fe-4S] cluster is required as a cofactor.

The enzyme catalyses 5-amino-1-(5-phospho-beta-D-ribosyl)imidazole + S-adenosyl-L-methionine = 4-amino-2-methyl-5-(phosphooxymethyl)pyrimidine + CO + 5'-deoxyadenosine + formate + L-methionine + 3 H(+). Its pathway is cofactor biosynthesis; thiamine diphosphate biosynthesis. Functionally, catalyzes the synthesis of the hydroxymethylpyrimidine phosphate (HMP-P) moiety of thiamine from aminoimidazole ribotide (AIR) in a radical S-adenosyl-L-methionine (SAM)-dependent reaction. The chain is Phosphomethylpyrimidine synthase from Campylobacter fetus subsp. fetus (strain 82-40).